A 904-amino-acid polypeptide reads, in one-letter code: NADH-quinone oxidoreductase subunit G (904 aa).

The region spanning 1-83 (MATIHVDGKE…GSWISIDDEE (83 aa)) is the 2Fe-2S ferredoxin-type domain. Residues cysteine 34, cysteine 45, cysteine 48, and cysteine 67 each contribute to the [2Fe-2S] cluster site. Residues 83 to 122 (EAKVFRASVVEWLMTNHPHDCPVCEEGGHCHLQDMTVMTG) form the 4Fe-4S His(Cys)3-ligated-type domain. [4Fe-4S] cluster contacts are provided by histidine 99, cysteine 103, cysteine 106, cysteine 112, cysteine 151, cysteine 154, cysteine 157, cysteine 201, cysteine 228, cysteine 231, cysteine 235, and cysteine 263. One can recognise a 4Fe-4S Mo/W bis-MGD-type domain in the interval 221 to 277 (MQFSPSICHGCSSGCNISPGERYGELRRIENRFNGSVNQYFLCDRGRFGYGYVNRKD).

It belongs to the complex I 75 kDa subunit family. In terms of assembly, composed of 13 different subunits. Subunits NuoCD, E, F, and G constitute the peripheral sector of the complex. Requires [2Fe-2S] cluster as cofactor. It depends on [4Fe-4S] cluster as a cofactor.

The enzyme catalyses a quinone + NADH + 5 H(+)(in) = a quinol + NAD(+) + 4 H(+)(out). NDH-1 shuttles electrons from NADH, via FMN and iron-sulfur (Fe-S) centers, to quinones in the respiratory chain. The immediate electron acceptor for the enzyme in this species is believed to be ubiquinone. Couples the redox reaction to proton translocation (for every two electrons transferred, four hydrogen ions are translocated across the cytoplasmic membrane), and thus conserves the redox energy in a proton gradient. Required for plants roots colonization. The sequence is that of NADH-quinone oxidoreductase subunit G (nuoG) from Pseudomonas fluorescens.